The chain runs to 490 residues: GTPase Der (490 aa).

2 EngA-type G domains span residues 3–166 and 196–369; these read PVIA…PRDD and IKIA…KSAV. GTP is bound by residues 9-16, 56-60, and 118-121; these read GRPNVGKS, DTGGI, and NKVD. Residues 162 to 189 form a disordered region; sequence FPRDDDEPAEGEEEEVVAEGEEAKRIPG. Acidic residues predominate over residues 164–181; it reads RDDDEPAEGEEEEVVAEG. Residues 202–209, 249–253, and 314–317 each bind GTP; these read GRPNVGKS, DTAGV, and NKWD. The KH-like domain occupies 370 to 454; sequence TRWPTSRLTQ…PIRIEFKGGE (85 aa). The interval 453 to 490 is disordered; that stretch reads GENPYEGNKNTLTDRQVNKKRRLMSHNKKASKKRRDKK. The segment covering 470 to 490 has biased composition (basic residues); it reads NKKRRLMSHNKKASKKRRDKK.

Belongs to the TRAFAC class TrmE-Era-EngA-EngB-Septin-like GTPase superfamily. EngA (Der) GTPase family. In terms of assembly, associates with the 50S ribosomal subunit.

GTPase that plays an essential role in the late steps of ribosome biogenesis. In Pseudomonas fluorescens (strain Pf0-1), this protein is GTPase Der.